The chain runs to 341 residues: Protein pelota homolog (341 aa).

The protein belongs to the eukaryotic release factor 1 family. Pelota subfamily. As to quaternary structure, monomer. Requires a divalent metal cation as cofactor.

The protein localises to the cytoplasm. In terms of biological role, may function in recognizing stalled ribosomes, interact with stem-loop structures in stalled mRNA molecules, and effect endonucleolytic cleavage of the mRNA. May play a role in the release non-functional ribosomes and degradation of damaged mRNAs. Has endoribonuclease activity. The protein is Protein pelota homolog of Methanoculleus marisnigri (strain ATCC 35101 / DSM 1498 / JR1).